A 181-amino-acid polypeptide reads, in one-letter code: Adenylate kinase (181 aa).

Residue 10–15 participates in ATP binding; that stretch reads GAGKGT. Residues 30-59 form an NMP region; the sequence is STGDLFRYNISNGTELGLEAKKYLDAGDLV. AMP-binding positions include Thr31, Arg36, 57–59, 85–88, and Gln92; these read DLV and GYPR. The interval 126–132 is LID; sequence GRGRDDD. Residue Arg127 coordinates ATP. AMP contacts are provided by Arg129 and Arg140. Gly166 is a binding site for ATP.

This sequence belongs to the adenylate kinase family. As to quaternary structure, monomer.

It localises to the cytoplasm. The catalysed reaction is AMP + ATP = 2 ADP. The protein operates within purine metabolism; AMP biosynthesis via salvage pathway; AMP from ADP: step 1/1. Its function is as follows. Catalyzes the reversible transfer of the terminal phosphate group between ATP and AMP. Plays an important role in cellular energy homeostasis and in adenine nucleotide metabolism. The sequence is that of Adenylate kinase from Mycolicibacterium vanbaalenii (strain DSM 7251 / JCM 13017 / BCRC 16820 / KCTC 9966 / NRRL B-24157 / PYR-1) (Mycobacterium vanbaalenii).